The sequence spans 87 residues: Small ribosomal subunit protein bS20 (87 aa).

This sequence belongs to the bacterial ribosomal protein bS20 family.

Functionally, binds directly to 16S ribosomal RNA. The chain is Small ribosomal subunit protein bS20 from Clostridium botulinum (strain Alaska E43 / Type E3).